The chain runs to 255 residues: Imidazole glycerol phosphate synthase subunit HisF (255 aa).

Residues D12 and D131 contribute to the active site.

Belongs to the HisA/HisF family. As to quaternary structure, heterodimer of HisH and HisF.

The protein localises to the cytoplasm. The enzyme catalyses 5-[(5-phospho-1-deoxy-D-ribulos-1-ylimino)methylamino]-1-(5-phospho-beta-D-ribosyl)imidazole-4-carboxamide + L-glutamine = D-erythro-1-(imidazol-4-yl)glycerol 3-phosphate + 5-amino-1-(5-phospho-beta-D-ribosyl)imidazole-4-carboxamide + L-glutamate + H(+). The protein operates within amino-acid biosynthesis; L-histidine biosynthesis; L-histidine from 5-phospho-alpha-D-ribose 1-diphosphate: step 5/9. In terms of biological role, IGPS catalyzes the conversion of PRFAR and glutamine to IGP, AICAR and glutamate. The HisF subunit catalyzes the cyclization activity that produces IGP and AICAR from PRFAR using the ammonia provided by the HisH subunit. In Vesicomyosocius okutanii subsp. Calyptogena okutanii (strain HA), this protein is Imidazole glycerol phosphate synthase subunit HisF.